Here is a 142-residue protein sequence, read N- to C-terminus: Galactose-6-phosphate isomerase subunit LacA (142 aa).

Belongs to the LacAB/RpiB family. Heteromultimeric protein consisting of LacA and LacB.

It catalyses the reaction aldehydo-D-galactose 6-phosphate = keto-D-tagatose 6-phosphate. Its pathway is carbohydrate metabolism; D-galactose 6-phosphate degradation; D-tagatose 6-phosphate from D-galactose 6-phosphate: step 1/1. The chain is Galactose-6-phosphate isomerase subunit LacA from Clostridium acetobutylicum (strain ATCC 824 / DSM 792 / JCM 1419 / IAM 19013 / LMG 5710 / NBRC 13948 / NRRL B-527 / VKM B-1787 / 2291 / W).